Here is a 644-residue protein sequence, read N- to C-terminus: MSLIECKNINRYFGSGENRVHILKDISLSIEKGDFVAIIGQSGSGKSTLMNILGCLDTAGSGSYRIDGIETAKMQPDELAALRRERFGFIFQRYNLLSSLTARDNVALPAVYMGAGGKERSARADKLLQDLGLASKEGNKPGELSGGQQQRVSIARALMNGGEIIFADEPTGALDTASGKNVMEIIRRLHEAGHTVIMVTHDPDIAANANRVIEIRDGEIISDTSKNPEIPASNVGRIREKASWSFYYDQFVEAFRMSVQAVLAHKMRSLLTMLGIIIGIASVVSVVALGNGSQKKILEDISSIGTNTISIFPGRGFGDRRSGRIKTLTIDDAKIIAKQSYVASATPMTSSGGTLTYRNTDLTASLYGVGEQYFDVRGLKLETGRLFDENDVKEDAQVVVIDQNVKDKLFADSDPLGKTILFRKRPLTVIGVMKKDENAFGNSDVLMLWSPYTTVMHQITGESHTNSITVKIKDNANTQVAEKGLTDLLKARHGTEDFFMNNSDSIRQIVESTTGTMKLLISSIALISLVVGGIGVMNIMLVSVTERTKEIGIRMAIGARRGNILQQFLIEAVLICVIGGLVGVGLSAAVSLVFNHFVTDFPMDISAMSVIGAVACSTGIGIAFGFMPANKAAKLNPIDALAQD.

The ABC transporter domain maps to 4-242 (IECKNINRYF…SNVGRIREKA (239 aa)). Position 40–47 (40–47 (GQSGSGKS)) interacts with ATP. Transmembrane regions (helical) follow at residues 270-290 (LLTM…VALG), 524-544 (IALI…LVSV), 574-594 (LICV…SLVF), and 607-627 (AMSV…FGFM).

It belongs to the ABC transporter superfamily. Macrolide exporter (TC 3.A.1.122) family. In terms of assembly, homodimer.

The protein localises to the cell inner membrane. Non-canonical ABC transporter that contains transmembrane domains (TMD), which form a pore in the inner membrane, and an ATP-binding domain (NBD), which is responsible for energy generation. Confers resistance against macrolides. The polypeptide is Macrolide export ATP-binding/permease protein MacB (Neisseria meningitidis serogroup B (strain ATCC BAA-335 / MC58)).